Reading from the N-terminus, the 223-residue chain is Cytidine deaminase 3 (223 aa).

2 consecutive CMP/dCMP-type deaminase domains span residues Thr21–Asp154 and Ser184–Gly223. Residue Asn62 to Glu64 coordinates substrate. His75 provides a ligand contact to Zn(2+). The active-site Proton donor is Glu77. Residues Cys110 and Cys113 each contribute to the Zn(2+) site.

The protein belongs to the cytidine and deoxycytidylate deaminase family. As to quaternary structure, homodimer. Zn(2+) is required as a cofactor.

It carries out the reaction cytidine + H2O + H(+) = uridine + NH4(+). The enzyme catalyses 2'-deoxycytidine + H2O + H(+) = 2'-deoxyuridine + NH4(+). In terms of biological role, this enzyme scavenges exogenous and endogenous cytidine and 2'-deoxycytidine for UMP synthesis. The chain is Cytidine deaminase 3 (CDA3) from Arabidopsis thaliana (Mouse-ear cress).